The following is a 210-amino-acid chain: Quaternary-amine-specific corrinoid protein (210 aa).

Positions 1–90 (MADWKNLTQA…VLGSGDTAVA (90 aa)) constitute a B12-binding N-terminal domain. The 121-residue stretch at 90–210 (AGTILIGTAH…GVKICQAWVG (121 aa)) folds into the B12-binding domain. His103 lines the methylcob(III)alamin pocket.

It belongs to the methylamine corrinoid protein family. The proline betaine:THF methyl transfer system is composed of two methyltransferases, MtpB and MtqA, and the corrinoid protein MtqC. The L-carnitine:THF methyl transfer system is composed of two methyltransferases, MtcB and MtqA, and the corrinoid protein MtqC.

In terms of biological role, involved in the degradation of the quaternary amines L-proline betaine and L-carnitine. Component of a corrinoid-dependent methyltransferase system that transfers a methyl group from L-proline betaine or L-carnitine to tetrahydrofolate (THF), forming methyl-THF, a key intermediate in the Wood-Ljungdahl acetogenesis pathway. Acts as a methyl group carrier between MtpB or MtcB, and MtqA. A methyl group from L-proline betaine or L-carnitine is first transferred to the corrinoid prosthetic group of MtqC by MtpB or MtcB, respectively, and then transferred from MtqC to THF by MtqA. The sequence is that of Quaternary-amine-specific corrinoid protein from Eubacterium limosum.